The primary structure comprises 249 residues: 3-deoxy-manno-octulosonate cytidylyltransferase (249 aa).

This sequence belongs to the KdsB family.

It localises to the cytoplasm. It catalyses the reaction 3-deoxy-alpha-D-manno-oct-2-ulosonate + CTP = CMP-3-deoxy-beta-D-manno-octulosonate + diphosphate. Its pathway is nucleotide-sugar biosynthesis; CMP-3-deoxy-D-manno-octulosonate biosynthesis; CMP-3-deoxy-D-manno-octulosonate from 3-deoxy-D-manno-octulosonate and CTP: step 1/1. The protein operates within bacterial outer membrane biogenesis; lipopolysaccharide biosynthesis. Its function is as follows. Activates KDO (a required 8-carbon sugar) for incorporation into bacterial lipopolysaccharide in Gram-negative bacteria. In Coxiella burnetii (strain CbuG_Q212) (Coxiella burnetii (strain Q212)), this protein is 3-deoxy-manno-octulosonate cytidylyltransferase.